The primary structure comprises 336 residues: Holliday junction branch migration complex subunit RuvB (336 aa).

The tract at residues methionine 1–tyrosine 182 is large ATPase domain (RuvB-L). Residues leucine 21, arginine 22, glycine 63, lysine 66, threonine 67, threonine 68, glutamate 129–tyrosine 131, arginine 172, tyrosine 182, and arginine 219 each bind ATP. Mg(2+) is bound at residue threonine 67. Residues threonine 183–glutamate 253 form a small ATPAse domain (RuvB-S) region. The segment at lysine 256–serine 336 is head domain (RuvB-H). Residues arginine 311 and arginine 316 each contribute to the DNA site.

It belongs to the RuvB family. In terms of assembly, homohexamer. Forms an RuvA(8)-RuvB(12)-Holliday junction (HJ) complex. HJ DNA is sandwiched between 2 RuvA tetramers; dsDNA enters through RuvA and exits via RuvB. An RuvB hexamer assembles on each DNA strand where it exits the tetramer. Each RuvB hexamer is contacted by two RuvA subunits (via domain III) on 2 adjacent RuvB subunits; this complex drives branch migration. In the full resolvosome a probable DNA-RuvA(4)-RuvB(12)-RuvC(2) complex forms which resolves the HJ.

Its subcellular location is the cytoplasm. It catalyses the reaction ATP + H2O = ADP + phosphate + H(+). Functionally, the RuvA-RuvB-RuvC complex processes Holliday junction (HJ) DNA during genetic recombination and DNA repair, while the RuvA-RuvB complex plays an important role in the rescue of blocked DNA replication forks via replication fork reversal (RFR). RuvA specifically binds to HJ cruciform DNA, conferring on it an open structure. The RuvB hexamer acts as an ATP-dependent pump, pulling dsDNA into and through the RuvAB complex. RuvB forms 2 homohexamers on either side of HJ DNA bound by 1 or 2 RuvA tetramers; 4 subunits per hexamer contact DNA at a time. Coordinated motions by a converter formed by DNA-disengaged RuvB subunits stimulates ATP hydrolysis and nucleotide exchange. Immobilization of the converter enables RuvB to convert the ATP-contained energy into a lever motion, pulling 2 nucleotides of DNA out of the RuvA tetramer per ATP hydrolyzed, thus driving DNA branch migration. The RuvB motors rotate together with the DNA substrate, which together with the progressing nucleotide cycle form the mechanistic basis for DNA recombination by continuous HJ branch migration. Branch migration allows RuvC to scan DNA until it finds its consensus sequence, where it cleaves and resolves cruciform DNA. This chain is Holliday junction branch migration complex subunit RuvB, found in Lachnoclostridium phytofermentans (strain ATCC 700394 / DSM 18823 / ISDg) (Clostridium phytofermentans).